We begin with the raw amino-acid sequence, 359 residues long: 3-dehydroquinate synthase (359 aa).

NAD(+) is bound by residues 71–76, 105–109, 129–130, lysine 142, lysine 151, and 169–172; these read DGEQYK, GVIGD, TT, and CLST. The Zn(2+) site is built by glutamate 184, histidine 247, and histidine 264.

Belongs to the sugar phosphate cyclases superfamily. Dehydroquinate synthase family. The cofactor is Co(2+). Zn(2+) is required as a cofactor. It depends on NAD(+) as a cofactor.

It localises to the cytoplasm. The catalysed reaction is 7-phospho-2-dehydro-3-deoxy-D-arabino-heptonate = 3-dehydroquinate + phosphate. The protein operates within metabolic intermediate biosynthesis; chorismate biosynthesis; chorismate from D-erythrose 4-phosphate and phosphoenolpyruvate: step 2/7. Its function is as follows. Catalyzes the conversion of 3-deoxy-D-arabino-heptulosonate 7-phosphate (DAHP) to dehydroquinate (DHQ). In Shewanella pealeana (strain ATCC 700345 / ANG-SQ1), this protein is 3-dehydroquinate synthase.